The primary structure comprises 570 residues: Cation/calcium exchanger 1 (570 aa).

The next 13 helical transmembrane spans lie at 14-34, 97-117, 141-161, 176-196, 212-232, 235-255, 344-364, 371-391, 401-421, 427-447, 479-499, 513-533, and 546-566; these read LSLLINIFFIFLIFLHFASQT, SPVLGHLVLSAWLFVLFYLLG, MAGVTLLSLGNGAPDLFSSVV, ILGGAFFVSSFVVGTICVLIG, VFLLVALCCLGLIIFIGKVTI, ALCYLSIYLLYVGFLSVSHFF, CAVVSTAIAPVLLTELYCSHY, LILYIISGSIGLIVGILAYLT, FSLVWLLGGFTMSVTWTYMIA, LLISLGNIFGISPSVLGLTVL, YAGPLFNTVIGLGVPLVISSL, SLLETLGFLMVGLLWALVIMP, and GLLAIYLCFLSLRLARVFGVL.

Belongs to the Ca(2+):cation antiporter (CaCA) (TC 2.A.19) family. Cation/calcium exchanger (CCX) subfamily. As to expression, expressed in roots, leaves, stems and flowers.

The protein resides in the vacuole membrane. In terms of biological role, vacuolar membrane-localized H(+)-dependent K(+) and Na(+) transporter. This Arabidopsis thaliana (Mouse-ear cress) protein is Cation/calcium exchanger 1 (CCX1).